The chain runs to 216 residues: Uracil phosphoribosyltransferase (216 aa).

Residues Arg-85, Arg-110, and Asp-135–Ser-143 each bind 5-phospho-alpha-D-ribose 1-diphosphate. Uracil contacts are provided by residues Ile-200 and Gly-205–Ala-207. Asp-206 serves as a coordination point for 5-phospho-alpha-D-ribose 1-diphosphate.

This sequence belongs to the UPRTase family. Mg(2+) serves as cofactor.

The enzyme catalyses UMP + diphosphate = 5-phospho-alpha-D-ribose 1-diphosphate + uracil. The protein operates within pyrimidine metabolism; UMP biosynthesis via salvage pathway; UMP from uracil: step 1/1. Its activity is regulated as follows. Allosterically activated by GTP. Functionally, catalyzes the conversion of uracil and 5-phospho-alpha-D-ribose 1-diphosphate (PRPP) to UMP and diphosphate. The sequence is that of Uracil phosphoribosyltransferase from Burkholderia vietnamiensis (strain G4 / LMG 22486) (Burkholderia cepacia (strain R1808)).